A 240-amino-acid polypeptide reads, in one-letter code: Probable transcriptional regulatory protein Nmul_A2722 (240 aa).

This sequence belongs to the TACO1 family.

It is found in the cytoplasm. In Nitrosospira multiformis (strain ATCC 25196 / NCIMB 11849 / C 71), this protein is Probable transcriptional regulatory protein Nmul_A2722.